A 752-amino-acid polypeptide reads, in one-letter code: Maltodextrin phosphorylase (752 aa).

K603 is modified (N6-(pyridoxal phosphate)lysine).

It belongs to the glycogen phosphorylase family. Requires pyridoxal 5'-phosphate as cofactor.

The enzyme catalyses [(1-&gt;4)-alpha-D-glucosyl](n) + phosphate = [(1-&gt;4)-alpha-D-glucosyl](n-1) + alpha-D-glucose 1-phosphate. Functionally, phosphorylase is an important allosteric enzyme in carbohydrate metabolism. Enzymes from different sources differ in their regulatory mechanisms and in their natural substrates. However, all known phosphorylases share catalytic and structural properties. This chain is Maltodextrin phosphorylase (malP), found in Streptococcus pneumoniae serotype 4 (strain ATCC BAA-334 / TIGR4).